The primary structure comprises 712 residues: Voltage-gated chloride channel TMC4 (712 aa).

Positions 1–39 (MEENPTLESEAWGSSRGWLAPREARGAPCSSPGPSLSSV) are disordered. Residues 1-168 (MEENPTLESE…GTESYFSLLR (168 aa)) are Extracellular-facing. Asparagine 107 carries an N-linked (GlcNAc...) asparagine glycan. The chain crosses the membrane as a helical span at residues 169 to 189 (FLLLLNVLASVLMACMTLLPT). Over 190–249 (WLGGAPPGPPGPDISSPCGSYNPHSQGLVTFATQLFNLLSGEGYLEWSPLFYGFYPPRPR) the chain is Cytoplasmic. A helical transmembrane segment spans residues 250–270 (LAVTYLCWAFAVGLICLLLIL). Over 271 to 348 (HRSVSGLKQT…GQQARVWLVR (78 aa)) the chain is Extracellular. The chain crosses the membrane as a helical span at residues 349–369 (VLLNLLVVALLGAAFYGVYWA). At 370–394 (TGCTVELQEMPLVQELPLLKLGVNY) the chain is on the cytoplasmic side. A helical membrane pass occupies residues 395 to 415 (LPSIFIAGVNFVLPPVFKLIA). The Extracellular portion of the chain corresponds to 416–425 (PLEGYTRSRQ). A helical transmembrane segment spans residues 426–446 (IVFILLRTVFLRLASLVVLLF). Over 447–483 (SLWNQITCGGDSEAEDCKTCGYNYKQLPCWETVLGQE) the chain is Cytoplasmic. A helical transmembrane segment spans residues 484–504 (MYKLLLFDLLTVLAVALLIQF). The Extracellular segment spans residues 505–542 (PRKLLCGLCPGALGRLAGTQEFQVPDEVLGLIYAQTVV). The chain crosses the membrane as a helical span at residues 543–565 (WVGSFFCPLLPLLNTVKFLLLFY). Topologically, residues 566–592 (LKKLTLFSTCSPAARTFRASAANFFFP) are cytoplasmic. A helical membrane pass occupies residues 593 to 613 (LVLLLGLAISSVPLLYSIFLI). The Extracellular portion of the chain corresponds to 614–654 (PPSKLCGPFRGQSSIWAQIPESISSLPETTQNFLFFLGTQA). Residues 655-677 (FAVPLLLISSILMAYTVALANSY) form a helical membrane-spanning segment. The Cytoplasmic segment spans residues 678–712 (GRLISELKRQRQTEAQNKVFLARRAVALTSTKPAL).

Belongs to the TMC family.

It localises to the membrane. The enzyme catalyses chloride(in) = chloride(out). Voltage-gated chloride channel involved in high-concentration salt taste sensation. Depolarization induced by high NaCl concentration may trigger the activation of TMC4-mediated chloride influx into taste bud cells, helping the return to resting potential. Also allows permeation of organic anions including gluconate, but their current amplitudes at positive potentials are less than that of chloride. Involved in pH and temperature-dependent modulation of salty taste. The protein is Voltage-gated chloride channel TMC4 of Homo sapiens (Human).